The following is a 357-amino-acid chain: Sorbitol dehydrogenase 2 (357 aa).

Cys-43 contributes to the Zn(2+) binding site. Tyr-49 serves as a coordination point for substrate. Zn(2+) contacts are provided by His-68 and Glu-69. Glu-154 contacts substrate. Residues Asp-202, Lys-207, 275-277 (VGM), and 299-301 (CFR) contribute to the NAD(+) site. Substrate contacts are provided by Arg-301 and Tyr-302.

Belongs to the zinc-containing alcohol dehydrogenase family. Homotetramer. Requires Zn(2+) as cofactor.

It catalyses the reaction keto-D-fructose + NADH + H(+) = D-sorbitol + NAD(+). It carries out the reaction xylitol + NAD(+) = D-xylulose + NADH + H(+). Polyol dehydrogenase that catalyzes the reversible NAD(+)-dependent oxidation of various sugar alcohols. Is active with D-sorbitol (D-glucitol) and xylitol as substrates, leading to the C2-oxidized product D-fructose and D-xylulose, respectively. This chain is Sorbitol dehydrogenase 2 (SOR2), found in Saccharomyces cerevisiae (strain ATCC 204508 / S288c) (Baker's yeast).